The chain runs to 445 residues: MLAYKISPSSISGRVSVPPSKSHTLRAIFWASVAQGTSIIHHALASPDSEAMIQACKQLGAKILKKSTHLEITGTPHLILPKNTTINAGSSGIVFRFFTALAAIFSEKITITESSQLQRRPIAPLIQALENFGATFSYEGEPYSLPFSVLGPMSSGYTEVIGEDSQYASALAIACSLAEGPFSFTILNPKERPWFALTLWWLDFLGIPYAQSEDTYSFEGKTRPQAFSYTVGGDFSSAAFLAAAALLSQSPHPTYLENLNIDDIQGDKELFFLLKKLGANITFENNTIIIFPSTFSGGNIDMDPFIDALPILAVLCCFATSSSYLYNARSAKNKESDRIIAITQELQKMGACIQPCHDGLLINPSPLYGASMHSHKDHRIAMALSIAAMHASGDSIIYDTDCVKKTFPNFIQILNSLHTNIQEHYEHISLRPADSRQDVVWQGSR.

3-phosphoshikimate is bound by residues K21, S22, and R26. K21 serves as a coordination point for phosphoenolpyruvate. The phosphoenolpyruvate site is built by G92 and R120. 3-phosphoshikimate-binding residues include S165, Q166, D307, and K334. Q166 is a phosphoenolpyruvate binding site. Catalysis depends on D307, which acts as the Proton acceptor. R338, R379, and K405 together coordinate phosphoenolpyruvate.

The protein belongs to the EPSP synthase family. As to quaternary structure, monomer.

The protein resides in the cytoplasm. The enzyme catalyses 3-phosphoshikimate + phosphoenolpyruvate = 5-O-(1-carboxyvinyl)-3-phosphoshikimate + phosphate. It participates in metabolic intermediate biosynthesis; chorismate biosynthesis; chorismate from D-erythrose 4-phosphate and phosphoenolpyruvate: step 6/7. In terms of biological role, catalyzes the transfer of the enolpyruvyl moiety of phosphoenolpyruvate (PEP) to the 5-hydroxyl of shikimate-3-phosphate (S3P) to produce enolpyruvyl shikimate-3-phosphate and inorganic phosphate. The sequence is that of 3-phosphoshikimate 1-carboxyvinyltransferase from Chlamydia abortus (strain DSM 27085 / S26/3) (Chlamydophila abortus).